A 401-amino-acid chain; its full sequence is Dual-specificity RNA methyltransferase RlmN (401 aa).

The active-site Proton acceptor is the E114. The region spanning 120–365 (DKGRGTLCVS…TMVRRTRGDD (246 aa)) is the Radical SAM core domain. A disulfide bridge links C127 with C370. [4Fe-4S] cluster-binding residues include C134, C138, and C141. Residues 187–188 (GE), S219, 241–243 (SLH), and N327 each bind S-adenosyl-L-methionine. C370 serves as the catalytic S-methylcysteine intermediate.

This sequence belongs to the radical SAM superfamily. RlmN family. [4Fe-4S] cluster serves as cofactor.

The protein resides in the cytoplasm. The catalysed reaction is adenosine(2503) in 23S rRNA + 2 reduced [2Fe-2S]-[ferredoxin] + 2 S-adenosyl-L-methionine = 2-methyladenosine(2503) in 23S rRNA + 5'-deoxyadenosine + L-methionine + 2 oxidized [2Fe-2S]-[ferredoxin] + S-adenosyl-L-homocysteine. The enzyme catalyses adenosine(37) in tRNA + 2 reduced [2Fe-2S]-[ferredoxin] + 2 S-adenosyl-L-methionine = 2-methyladenosine(37) in tRNA + 5'-deoxyadenosine + L-methionine + 2 oxidized [2Fe-2S]-[ferredoxin] + S-adenosyl-L-homocysteine. Specifically methylates position 2 of adenine 2503 in 23S rRNA and position 2 of adenine 37 in tRNAs. m2A2503 modification seems to play a crucial role in the proofreading step occurring at the peptidyl transferase center and thus would serve to optimize ribosomal fidelity. This is Dual-specificity RNA methyltransferase RlmN from Xanthomonas axonopodis pv. citri (strain 306).